The primary structure comprises 226 residues: Agamous-like MADS-box protein AGL23 (226 aa).

The region spanning 6–66 is the MADS-box domain; it reads LGRRKVEIVK…GKVFSFGHPN (61 aa). Positions 95 to 132 form a coiled coil; it reads VQMLNKSYTEVKAEVEKEQKNKQSRAQNERENENAEEW. Residues 108-127 are compositionally biased toward basic and acidic residues; it reads EVEKEQKNKQSRAQNERENE. The disordered stretch occupies residues 108 to 131; the sequence is EVEKEQKNKQSRAQNERENENAEE.

Its subcellular location is the nucleus. Functionally, probable transcription factor that controls female gametophyte (megagametogenesis) development and chloroplast biogenesis during embryo development. This is Agamous-like MADS-box protein AGL23 from Arabidopsis thaliana (Mouse-ear cress).